Reading from the N-terminus, the 435-residue chain is Probable exopolygalacturonase X (435 aa).

Positions 1–22 (MRLTHVLSHTLGLLALGATAEA) are cleaved as a signal peptide. The disordered stretch occupies residues 31–55 (CSPKKPFRPLPTSSSRDKTCHVRSH). The span at 45-55 (SRDKTCHVRSH) shows a compositional bias: basic and acidic residues. N-linked (GlcNAc...) asparagine glycosylation is found at asparagine 93, asparagine 112, asparagine 128, and asparagine 198. PbH1 repeat units lie at residues 199–229 (SSNV…DTYR) and 230–251 (SNNI…SFKP). Aspartate 244 functions as the Proton donor in the catalytic mechanism. Cysteine 246 and cysteine 263 are oxidised to a cystine. Asparagine 252 and asparagine 264 each carry an N-linked (GlcNAc...) asparagine glycan. One copy of the PbH1 3 repeat lies at 253–273 (STNILVQNLHCNGSHGISVGS). Histidine 267 is a catalytic residue. Asparagine 291, asparagine 296, asparagine 328, and asparagine 353 each carry an N-linked (GlcNAc...) asparagine glycan. A PbH1 4 repeat occupies 326–347 (VKNITYDTALIDNVDWAIEITQ). A PbH1 5 repeat occupies 361–409 (PSSLTISDVHIKNFRGTTSGSEDPYVGTIVCSSPDTCSDIYTSNINVTS). The cysteines at positions 391 and 397 are disulfide-linked. N-linked (GlcNAc...) asparagine glycosylation is found at asparagine 406 and asparagine 429.

It belongs to the glycosyl hydrolase 28 family.

The protein resides in the secreted. It catalyses the reaction [(1-&gt;4)-alpha-D-galacturonosyl](n) + H2O = alpha-D-galacturonate + [(1-&gt;4)-alpha-D-galacturonosyl](n-1). Its function is as follows. Specific in hydrolyzing the terminal glycosidic bond of polygalacturonic acid and oligogalacturonates. The sequence is that of Probable exopolygalacturonase X (pgaX) from Aspergillus niger (strain ATCC MYA-4892 / CBS 513.88 / FGSC A1513).